A 577-amino-acid chain; its full sequence is Autophagy-related protein 20 (577 aa).

Positions 57–81 (GQSYVAPHSGGGRTSSGSSSSASLQ) are disordered. Positions 95-239 (GEQGRVRILE…DFLDPNNANW (145 aa)) constitute a PX domain. Residues Arg131, Ser133, Lys157, and Arg205 each contribute to the a 1,2-diacyl-sn-glycero-3-phospho-(1D-myo-inositol-3-phosphate) site.

Belongs to the sorting nexin family.

It is found in the endosome membrane. It localises to the preautophagosomal structure membrane. Its function is as follows. Required for cytoplasm to vacuole transport (Cvt), pexophagy and mitophagy. Also involved in endoplasmic reticulum-specific autophagic process and is essential for the survival of cells subjected to severe ER stress. Functions in protein retrieval from the endocytic pathway. In Eremothecium gossypii (strain ATCC 10895 / CBS 109.51 / FGSC 9923 / NRRL Y-1056) (Yeast), this protein is Autophagy-related protein 20 (ATG20).